A 349-amino-acid polypeptide reads, in one-letter code: Insulin gene enhancer protein ISL-1 (349 aa).

LIM zinc-binding domains lie at 17–70 and 79–133; these read CVGC…CKRD and CAKC…RADH. The segment at residues 181–240 is a DNA-binding region (homeobox); that stretch reads TTRVRTVLNEKQLHTLRTCYAANPRPDALMKEQLVEMTGLSPRVIRVWFQNKRCKDKKRS. The LIM-binding domain (LID) stretch occupies residues 262–291; that stretch reads GTPMVAASPERHDGGLQANPVEVQSYQPPW. The interval 312 to 349 is disordered; that stretch reads VNFSEGGPGSNSTGSEVASMSSQLPDTPNSMVASPIEA. Over residues 321-343 the composition is skewed to polar residues; the sequence is SNSTGSEVASMSSQLPDTPNSMV.

In terms of assembly, at neuronal promoters, displaces LDB1 from LHX3 LIM domain to form a ternary complex in which ISL1 contacts both LHX3 and LDB1; allosteric structural changes in the DNA binding domain of LHX3, induced by the ISL1:LHX3 interaction, may explain differences in sequence specificity of the different complexes. Interacts with LHX3. Interacts (via C-terminus) with POU4F2 (via C-terminus) isoform 1. Interacts with POU3F2. Interacts with POU4F3. Interacts (via N-terminal domain) with MLIP; the interaction represses ISL1 transactivator activity. Interacts with GCN5/KAT2A. Interactions of ISL1 with MLIP1 or KAT2A may be mutually exclusive. In terms of processing, ubiquitinated probably by WWP1 E3 ubiquitin ligase; ubiquitination is followed by protein degradation. Phosphorylated. In terms of tissue distribution, expressed in subsets of neurons of the adrenal medulla and dorsal root ganglion, inner nuclear and ganglion cell layers in the retina, the pineal and some regions of the brain.

It localises to the nucleus. Its function is as follows. DNA-binding transcriptional activator. Recognizes and binds to the consensus octamer binding site 5'-ATAATTAA-3' in promoter of target genes. Plays a fundamental role in the gene regulatory network essential for retinal ganglion cell (RGC) differentiation. Cooperates with the transcription factor POU4F2 to achieve maximal levels of expression of RGC target genes and RGC fate specification in the developing retina. Involved in the specification of motor neurons in cooperation with LHX3 and LDB1. Binds to insulin gene enhancer sequences. Essential for heart development. Marker of one progenitor cell population that give rise to the outflow tract, right ventricle, a subset of left ventricular cells, and a large number of atrial cells as well, its function is required for these progenitors to contribute to the heart. Controls the expression of FGF and BMP growth factors in this cell population and is required for proliferation and survival of cells within pharyngeal foregut endoderm and adjacent splanchnic mesoderm as well as for migration of cardiac progenitors into the heart. The protein is Insulin gene enhancer protein ISL-1 (ISL1) of Homo sapiens (Human).